The primary structure comprises 225 residues: UPF0758 protein NMC1174 (225 aa).

An MPN domain is found at 102 to 224 (VLSDPDTVAD…VRSFRQLGLM (123 aa)). His-173, His-175, and Asp-186 together coordinate Zn(2+). Positions 173–186 (HNHPGGSPEPSQED) match the JAMM motif motif.

It belongs to the UPF0758 family.

In Neisseria meningitidis serogroup C / serotype 2a (strain ATCC 700532 / DSM 15464 / FAM18), this protein is UPF0758 protein NMC1174.